We begin with the raw amino-acid sequence, 114 residues long: Putative movement protein (114 aa).

A helical transmembrane segment spans residues 27 to 47 (LIGIILLVTVCLIVLWVCIML). Positions 79-114 (RTPFEATGPERERNWDARRQSTTVNPASQPNTGSVF) are disordered. Residues 86 to 97 (GPERERNWDARR) show a composition bias toward basic and acidic residues. A compositionally biased stretch (polar residues) spans 98 to 114 (QSTTVNPASQPNTGSVF).

Belongs to the nanovirus movement protein family.

It is found in the host cell membrane. May transport viral genome to neighboring plant cells directly through plasmosdesmata, without any budding. The movement protein allows efficient cell to cell propagation, by bypassing the host cell wall barrier. In Faba bean necrotic yellows virus (isolate Syrian SV292-88) (FBNYV), this protein is Putative movement protein (DNA-M).